Consider the following 762-residue polypeptide: Phosphoribosylformylglycinamidine synthase subunit PurL (762 aa).

His58 is an active-site residue. Residues Tyr61 and Arg105 each contribute to the ATP site. Glu107 is a binding site for Mg(2+). Residues 108–111 (SHNH) and Arg130 each bind substrate. The active-site Proton acceptor is His109. Asp131 serves as a coordination point for Mg(2+). Gln255 contributes to the substrate binding site. Asp283 is a Mg(2+) binding site. 327–329 (ESQ) provides a ligand contact to substrate. The ATP site is built by Asn513 and Gly550. A Mg(2+)-binding site is contributed by Asn551. Ser553 contacts substrate.

The protein belongs to the FGAMS family. Monomer. Part of the FGAM synthase complex composed of 1 PurL, 1 PurQ and 2 PurS subunits.

It localises to the cytoplasm. It carries out the reaction N(2)-formyl-N(1)-(5-phospho-beta-D-ribosyl)glycinamide + L-glutamine + ATP + H2O = 2-formamido-N(1)-(5-O-phospho-beta-D-ribosyl)acetamidine + L-glutamate + ADP + phosphate + H(+). The protein operates within purine metabolism; IMP biosynthesis via de novo pathway; 5-amino-1-(5-phospho-D-ribosyl)imidazole from N(2)-formyl-N(1)-(5-phospho-D-ribosyl)glycinamide: step 1/2. Functionally, part of the phosphoribosylformylglycinamidine synthase complex involved in the purines biosynthetic pathway. Catalyzes the ATP-dependent conversion of formylglycinamide ribonucleotide (FGAR) and glutamine to yield formylglycinamidine ribonucleotide (FGAM) and glutamate. The FGAM synthase complex is composed of three subunits. PurQ produces an ammonia molecule by converting glutamine to glutamate. PurL transfers the ammonia molecule to FGAR to form FGAM in an ATP-dependent manner. PurS interacts with PurQ and PurL and is thought to assist in the transfer of the ammonia molecule from PurQ to PurL. In Corynebacterium glutamicum (strain ATCC 13032 / DSM 20300 / JCM 1318 / BCRC 11384 / CCUG 27702 / LMG 3730 / NBRC 12168 / NCIMB 10025 / NRRL B-2784 / 534), this protein is Phosphoribosylformylglycinamidine synthase subunit PurL.